The following is a 264-amino-acid chain: Thymidylate synthase (264 aa).

Arg-21 contributes to the dUMP binding site. His-51 lines the (6R)-5,10-methylene-5,6,7,8-tetrahydrofolate pocket. Residue 126 to 127 (RR) participates in dUMP binding. The active-site Nucleophile is Cys-146. Residues 166–169 (RSCD), Asn-177, and 207–209 (HLY) contribute to the dUMP site. Asp-169 contributes to the (6R)-5,10-methylene-5,6,7,8-tetrahydrofolate binding site. Residue Ala-263 participates in (6R)-5,10-methylene-5,6,7,8-tetrahydrofolate binding.

Belongs to the thymidylate synthase family. Bacterial-type ThyA subfamily. In terms of assembly, homodimer.

It localises to the cytoplasm. It catalyses the reaction dUMP + (6R)-5,10-methylene-5,6,7,8-tetrahydrofolate = 7,8-dihydrofolate + dTMP. The protein operates within pyrimidine metabolism; dTTP biosynthesis. Functionally, catalyzes the reductive methylation of 2'-deoxyuridine-5'-monophosphate (dUMP) to 2'-deoxythymidine-5'-monophosphate (dTMP) while utilizing 5,10-methylenetetrahydrofolate (mTHF) as the methyl donor and reductant in the reaction, yielding dihydrofolate (DHF) as a by-product. This enzymatic reaction provides an intracellular de novo source of dTMP, an essential precursor for DNA biosynthesis. This Shigella boydii serotype 4 (strain Sb227) protein is Thymidylate synthase.